The chain runs to 335 residues: Putative T-box protein 7 (335 aa).

Positions 73–246 form a DNA-binding region, T-box; the sequence is LWSTFLECGT…NNPFAKGFRN (174 aa).

The protein localises to the nucleus. In Caenorhabditis elegans, this protein is Putative T-box protein 7.